Here is a 780-residue protein sequence, read N- to C-terminus: Ral guanine nucleotide dissociation stimulator-like 2 (780 aa).

A disordered region spans residues 1–92; that stretch reads MLPRPLRLLW…PTPPPRSSRR (92 aa). Ser-13 carries the phosphoserine modification. Gly residues predominate over residues 31-42; sequence GGGPGGRGVGGG. Residues 43-65 show a composition bias toward acidic residues; that stretch reads QEEEEEEEEDEAPVSVWDEEEDG. Residues 89-213 form the N-terminal Ras-GEF domain; it reads SSRRLRAGTL…GSADLIRNLR (125 aa). The Ras-GEF domain maps to 244 to 516; that stretch reads LADHLAEQLT…HRVSCEVEPP (273 aa). The segment covering 596–613 has biased composition (low complexity); that stretch reads HSLADPSHLSPPASSPRP. 2 disordered regions span residues 596–651 and 741–769; these read HSLA…GASD and TATL…PRIK. The Ras-associating domain maps to 651-738; that stretch reads DCRIIRVQME…HDFLLRQRRR (88 aa). Low complexity predominate over residues 741-758; sequence TATLGLTSSPSASGTPPS.

As to quaternary structure, interacts with SAMD9.

Functionally, probable guanine nucleotide exchange factor. Putative effector of Ras and/or Rap. Associates with the GTP-bound form of Rap 1A and H-Ras in vitro. The protein is Ral guanine nucleotide dissociation stimulator-like 2 (RGL2) of Canis lupus familiaris (Dog).